The sequence spans 268 residues: Tropinone reductase homolog (268 aa).

21–45 (LVTGGTRGIGYAIVEELANFGAEVY) serves as a coordination point for NADP(+). Position 154 (Ser-154) interacts with substrate. Tyr-167 (proton acceptor) is an active-site residue.

The protein belongs to the short-chain dehydrogenases/reductases (SDR) family.

This chain is Tropinone reductase homolog, found in Datura stramonium (Jimsonweed).